The following is a 449-amino-acid chain: uncharacterized protein (449 aa).

Disordered stretches follow at residues 1-58 and 71-125; these read MVKR…SLSS and EALE…VVEL. Basic and acidic residues predominate over residues 30-46; that stretch reads KQRDELREKQKRKREDS. A compositionally biased stretch (acidic residues) spans 103–124; it reads SDDDDDDNEEEDDNGFEDQVVE.

Belongs to the bystin family.

This is an uncharacterized protein from Caenorhabditis elegans.